The following is a 232-amino-acid chain: Phosphoribosylformylglycinamidine synthase subunit PurQ (232 aa).

The Glutamine amidotransferase type-1 domain occupies 2–232 (KIAIIQFGGT…SMADYITENF (231 aa)). Cys-86 functions as the Nucleophile in the catalytic mechanism. Active-site residues include His-203 and Glu-205.

Part of the FGAM synthase complex composed of 1 PurL, 1 PurQ and 2 PurS subunits.

Its subcellular location is the cytoplasm. The catalysed reaction is N(2)-formyl-N(1)-(5-phospho-beta-D-ribosyl)glycinamide + L-glutamine + ATP + H2O = 2-formamido-N(1)-(5-O-phospho-beta-D-ribosyl)acetamidine + L-glutamate + ADP + phosphate + H(+). It carries out the reaction L-glutamine + H2O = L-glutamate + NH4(+). It functions in the pathway purine metabolism; IMP biosynthesis via de novo pathway; 5-amino-1-(5-phospho-D-ribosyl)imidazole from N(2)-formyl-N(1)-(5-phospho-D-ribosyl)glycinamide: step 1/2. Its function is as follows. Part of the phosphoribosylformylglycinamidine synthase complex involved in the purines biosynthetic pathway. Catalyzes the ATP-dependent conversion of formylglycinamide ribonucleotide (FGAR) and glutamine to yield formylglycinamidine ribonucleotide (FGAM) and glutamate. The FGAM synthase complex is composed of three subunits. PurQ produces an ammonia molecule by converting glutamine to glutamate. PurL transfers the ammonia molecule to FGAR to form FGAM in an ATP-dependent manner. PurS interacts with PurQ and PurL and is thought to assist in the transfer of the ammonia molecule from PurQ to PurL. This chain is Phosphoribosylformylglycinamidine synthase subunit PurQ, found in Methanosarcina acetivorans (strain ATCC 35395 / DSM 2834 / JCM 12185 / C2A).